We begin with the raw amino-acid sequence, 1031 residues long: Semaphorin-6A (1031 aa).

Positions 1 to 18 (MRPAALLLCLTLLHCAGA) are cleaved as a signal peptide. The Extracellular portion of the chain corresponds to 19–649 (GFPEDSEPIS…KSNDQLVPVT (631 aa)). The Sema domain maps to 24–512 (SEPISISHGN…FSTCVIKVPL (489 aa)). Asn-33, Asn-49, and Asn-65 each carry an N-linked (GlcNAc...) asparagine glycan. 4 cysteine pairs are disulfide-bonded: Cys-107/Cys-117, Cys-135/Cys-144, Cys-258/Cys-369, and Cys-283/Cys-328. An N-linked (GlcNAc...) asparagine glycan is attached at Asn-282. Residues Asn-434 and Asn-461 are each glycosylated (N-linked (GlcNAc...) asparagine). 4 disulfide bridges follow: Cys-477-Cys-506, Cys-515-Cys-533, Cys-521-Cys-568, and Cys-525-Cys-542. A helical transmembrane segment spans residues 650 to 670 (LLAIAVILAFVMGAVFSGIIV). Residues 671–1031 (YCVCDHRRKD…TSMKPNDACT (361 aa)) lie on the Cytoplasmic side of the membrane. Ser-698 carries the phosphoserine modification. 3 disordered regions span residues 754–777 (ALPT…SREW), 861–902 (SSKS…TGLS), and 914–1031 (GLEY…DACT). Polar residues predominate over residues 921–931 (YPTNSLTRSHQ). Low complexity predominate over residues 932-951 (TTTLKRNNTNSSNSSHLSRN). Residue Ser-953 is modified to Phosphoserine. 2 stretches are compositionally biased toward polar residues: residues 971–998 (QVHS…SLTR) and 1019–1031 (PLST…DACT).

The protein belongs to the semaphorin family. As to quaternary structure, active as a homodimer or oligomer. The SEMA6A homodimer interacts with a PLXNA2 homodimer, giving rise to a heterotetramer. Interacts with EVL. In terms of tissue distribution, particularly high levels in spinal cord, cerebellum, metencephalon, superior and inferior colliculus, diencephalon, olfactory bulb and eye.

It is found in the cell membrane. Cell surface receptor for PLXNA2 that plays an important role in cell-cell signaling. Required for normal granule cell migration in the developing cerebellum. Promotes reorganization of the actin cytoskeleton and plays an important role in axon guidance in the developing central nervous system. Can act as repulsive axon guidance cue. Has repulsive action towards migrating granular neurons. May play a role in channeling sympathetic axons into the sympathetic chains and controlling the temporal sequence of sympathetic target innervation. This is Semaphorin-6A (Sema6a) from Mus musculus (Mouse).